The sequence spans 301 residues: MYAPVESNEGFNFKPELPTSSAYYRLLKKLRRQVGHAIRDFNMIEDGDKVMVCVSGGKDSYTLLDILLQFKRIAPINFDIVAVNLDQKQPGFPEDVLPRYMEENNIPYYILEKDTYSITKRLTPEGKTYCAVCSRLRRGSLYGFAQEIGATKVALGHHRDDIIATFFLNLFHGGSLKAMPPKLLSSDKKNILIRPLAYVEEKDIIKYAELRKFPIIPCNLCGSQENLQRAMINEMLREWDKQYPKRLHSIFGALQNVSPSQLADRDLFDFEVLDSQRELDFKDPEELKKRLDVVNLSFAAE.

The short motif at 55–60 (SGGKDS) is the PP-loop motif element. [4Fe-4S] cluster contacts are provided by Cys-130, Cys-133, and Cys-221.

It belongs to the TtcA family. In terms of assembly, homodimer. Requires Mg(2+) as cofactor. [4Fe-4S] cluster serves as cofactor.

Its subcellular location is the cytoplasm. It carries out the reaction cytidine(32) in tRNA + S-sulfanyl-L-cysteinyl-[cysteine desulfurase] + AH2 + ATP = 2-thiocytidine(32) in tRNA + L-cysteinyl-[cysteine desulfurase] + A + AMP + diphosphate + H(+). The protein operates within tRNA modification. In terms of biological role, catalyzes the ATP-dependent 2-thiolation of cytidine in position 32 of tRNA, to form 2-thiocytidine (s(2)C32). The sulfur atoms are provided by the cysteine/cysteine desulfurase (IscS) system. The sequence is that of tRNA-cytidine(32) 2-sulfurtransferase from Acinetobacter baumannii (strain AB307-0294).